We begin with the raw amino-acid sequence, 210 residues long: DNA-directed RNA polymerase III subunit rpc31 (210 aa).

Residue serine 103 is modified to Phosphoserine. The tract at residues lysine 151–glutamate 210 is disordered. Acidic residues-rich tracts occupy residues glutamate 163 to tyrosine 185 and glycine 193 to glutamate 210.

It belongs to the eukaryotic RPC7 RNA polymerase subunit family. In terms of assembly, component of the RNA polymerase III (Pol III) complex.

The protein localises to the cytoplasm. Its subcellular location is the nucleus. Its function is as follows. DNA-dependent RNA polymerase catalyzes the transcription of DNA into RNA using the four ribonucleoside triphosphates as substrates. Specific peripheric component of RNA polymerase III which synthesizes small RNAs, such as 5S rRNA and tRNAs. In Schizosaccharomyces pombe (strain 972 / ATCC 24843) (Fission yeast), this protein is DNA-directed RNA polymerase III subunit rpc31 (rpc31).